The chain runs to 93 residues: Histone H2B (93 aa).

Residues 1-12 (MPEPAKSAPAPK) show a composition bias toward low complexity. Residues 1 to 31 (MPEPAKSAPAPKKGSKKAVTKTQKKGDKKRX) are disordered. N6-acetyllysine is present on residues Lys6 and Lys13. Residues 13–28 (KGSKKAVTKTQKKGDK) show a composition bias toward basic residues. A Phosphoserine modification is found at Ser15. Residues Lys16 and Lys21 each carry the N6-acetyllysine modification.

This sequence belongs to the histone H2B family. As to quaternary structure, the nucleosome is a histone octamer containing two molecules each of H2A, H2B, H3 and H4 assembled in one H3-H4 heterotetramer and two H2A-H2B heterodimers. The octamer wraps approximately 147 bp of DNA. Post-translationally, monoubiquitination at the C-terminal Lys gives a specific tag for epigenetic transcriptional activation and is also prerequisite for histone H3 'Lys-4' and 'Lys-79' methylation. In terms of processing, phosphorylated on Ser-15 during apoptosis; which facilitates apoptotic chromatin condensation.

It is found in the nucleus. The protein resides in the chromosome. Its function is as follows. Core component of nucleosome. Nucleosomes wrap and compact DNA into chromatin, limiting DNA accessibility to the cellular machineries which require DNA as a template. Histones thereby play a central role in transcription regulation, DNA repair, DNA replication and chromosomal stability. DNA accessibility is regulated via a complex set of post-translational modifications of histones, also called histone code, and nucleosome remodeling. This chain is Histone H2B, found in Crocodylus niloticus (Nile crocodile).